The chain runs to 427 residues: 3-phosphoshikimate 1-carboxyvinyltransferase (427 aa).

3-phosphoshikimate is bound by residues Lys20, Ser21, and Arg25. Lys20 is a binding site for phosphoenolpyruvate. Phosphoenolpyruvate-binding residues include Gly92 and Arg120. Residues Ser166, Gln168, Asp312, and Lys339 each contribute to the 3-phosphoshikimate site. Phosphoenolpyruvate is bound at residue Gln168. The active-site Proton acceptor is Asp312. Residues Arg343 and Arg385 each coordinate phosphoenolpyruvate.

This sequence belongs to the EPSP synthase family. As to quaternary structure, monomer.

The protein resides in the cytoplasm. The enzyme catalyses 3-phosphoshikimate + phosphoenolpyruvate = 5-O-(1-carboxyvinyl)-3-phosphoshikimate + phosphate. It participates in metabolic intermediate biosynthesis; chorismate biosynthesis; chorismate from D-erythrose 4-phosphate and phosphoenolpyruvate: step 6/7. Catalyzes the transfer of the enolpyruvyl moiety of phosphoenolpyruvate (PEP) to the 5-hydroxyl of shikimate-3-phosphate (S3P) to produce enolpyruvyl shikimate-3-phosphate and inorganic phosphate. This Streptococcus uberis (strain ATCC BAA-854 / 0140J) protein is 3-phosphoshikimate 1-carboxyvinyltransferase.